We begin with the raw amino-acid sequence, 308 residues long: Homogentisate phytyltransferase (308 aa).

8 helical membrane passes run 13-33, 44-64, 104-124, 142-162, 173-193, 219-241, 245-263, and 279-299; these read PHTI…TILG, LDLV…IVGL, LAIA…SLII, AALC…FLFF, ITPI…IAIF, VFRG…GLWA, LNTA…LLWW, and FYQF…LALW.

The protein belongs to the UbiA prenyltransferase family.

Its subcellular location is the membrane. The catalysed reaction is phytyl diphosphate + homogentisate + H(+) = 2-methyl-6-phytyl-1,4-benzene-1,4-diol + CO2 + diphosphate. It functions in the pathway cofactor biosynthesis; tocopherol biosynthesis. Involved in the synthesis of tocopherol (vitamin E). Catalyzes the condensation of homogentisate and phytyl diphosphate to form dimethylphytylhydrquinone. The sequence is that of Homogentisate phytyltransferase from Synechocystis sp. (strain ATCC 27184 / PCC 6803 / Kazusa).